Consider the following 206-residue polypeptide: LexA repressor (206 aa).

Residues 28–48 (RAEIATRLGFKSANAAEEHLK) constitute a DNA-binding region (H-T-H motif). Active-site for autocatalytic cleavage activity residues include serine 123 and lysine 160.

It belongs to the peptidase S24 family. As to quaternary structure, homodimer.

It carries out the reaction Hydrolysis of Ala-|-Gly bond in repressor LexA.. Represses a number of genes involved in the response to DNA damage (SOS response), including recA and lexA. In the presence of single-stranded DNA, RecA interacts with LexA causing an autocatalytic cleavage which disrupts the DNA-binding part of LexA, leading to derepression of the SOS regulon and eventually DNA repair. This chain is LexA repressor, found in Shewanella sp. (strain MR-7).